The chain runs to 192 residues: uncharacterized protein (192 aa).

Positions 1–18 (MNSKFILKYFILAFFLVS) are cleaved as a signal peptide. Residue C19 is the site of N-palmitoyl cysteine attachment. C19 carries the S-diacylglycerol cysteine lipid modification.

The protein localises to the cell membrane. This is an uncharacterized protein from Borreliella burgdorferi (strain ATCC 35210 / DSM 4680 / CIP 102532 / B31) (Borrelia burgdorferi).